A 634-amino-acid chain; its full sequence is tRNA uridine 5-carboxymethylaminomethyl modification enzyme MnmG (634 aa).

G13–G18 contributes to the FAD binding site. G273–F287 provides a ligand contact to NAD(+).

Belongs to the MnmG family. In terms of assembly, homodimer. Heterotetramer of two MnmE and two MnmG subunits. FAD is required as a cofactor.

The protein localises to the cytoplasm. In terms of biological role, NAD-binding protein involved in the addition of a carboxymethylaminomethyl (cmnm) group at the wobble position (U34) of certain tRNAs, forming tRNA-cmnm(5)s(2)U34. This Buchnera aphidicola subsp. Cinara cedri (strain Cc) protein is tRNA uridine 5-carboxymethylaminomethyl modification enzyme MnmG.